A 576-amino-acid polypeptide reads, in one-letter code: Citrinin biosynthesis transcriptional activator ctnR (576 aa).

The interval 1 to 27 (MLSHEMASTAHRQPSRPTTRQRQRTGR) is disordered. The zn(2)-C6 fungal-type DNA-binding region spans 29–56 (CEECRRRKLRCDGQQPRCGVCVDSGVTC). Residues 102–148 (STPLTNDHHDGCSVSSASSRSDSNPPPTVSEPDMSLPNTTTSVSSAP) are disordered. A compositionally biased stretch (low complexity) spans 114–124 (SVSSASSRSDS). Residues 137-148 (LPNTTTSVSSAP) show a composition bias toward polar residues.

The protein localises to the nucleus. In terms of biological role, transcription factor that regulates the expression of the gene cluster that mediates the biosynthesis of the mycotoxin citrinin, a hepato-nephrotoxic compound to humans due to inhibition of respiration complex III. The protein is Citrinin biosynthesis transcriptional activator ctnR of Monascus purpureus (Red mold).